We begin with the raw amino-acid sequence, 167 residues long: MVEKIRIIGIDPGLRRTGWGIIDFLGNHMHFVASGTLHSDAQLNLASRLHQLHKGLSEVVHQFMPHEAAVEHVFVNKDATATLKLGQARAIALLVPAQAGLPVFEYAPNTIKKSVIGVGHGAKEQIHMMVKRLLPRAEFDGHDAADALALVICHSAHRTNFAHRIKG.

Active-site residues include aspartate 11, glutamate 71, and aspartate 143. Positions 11, 71, and 143 each coordinate Mg(2+).

This sequence belongs to the RuvC family. Homodimer which binds Holliday junction (HJ) DNA. The HJ becomes 2-fold symmetrical on binding to RuvC with unstacked arms; it has a different conformation from HJ DNA in complex with RuvA. In the full resolvosome a probable DNA-RuvA(4)-RuvB(12)-RuvC(2) complex forms which resolves the HJ. It depends on Mg(2+) as a cofactor.

It localises to the cytoplasm. It catalyses the reaction Endonucleolytic cleavage at a junction such as a reciprocal single-stranded crossover between two homologous DNA duplexes (Holliday junction).. In terms of biological role, the RuvA-RuvB-RuvC complex processes Holliday junction (HJ) DNA during genetic recombination and DNA repair. Endonuclease that resolves HJ intermediates. Cleaves cruciform DNA by making single-stranded nicks across the HJ at symmetrical positions within the homologous arms, yielding a 5'-phosphate and a 3'-hydroxyl group; requires a central core of homology in the junction. The consensus cleavage sequence is 5'-(A/T)TT(C/G)-3'. Cleavage occurs on the 3'-side of the TT dinucleotide at the point of strand exchange. HJ branch migration catalyzed by RuvA-RuvB allows RuvC to scan DNA until it finds its consensus sequence, where it cleaves and resolves the cruciform DNA. The sequence is that of Crossover junction endodeoxyribonuclease RuvC from Bartonella bacilliformis (strain ATCC 35685 / KC583 / Herrer 020/F12,63).